The chain runs to 163 residues: Acetolactate synthase isozyme 3 small subunit (163 aa).

An ACT domain is found at 4 to 78 (ILSVLLENES…DVLRVSELGQ (75 aa)).

It belongs to the acetolactate synthase small subunit family. Dimer of large and small chains.

It carries out the reaction 2 pyruvate + H(+) = (2S)-2-acetolactate + CO2. It participates in amino-acid biosynthesis; L-isoleucine biosynthesis; L-isoleucine from 2-oxobutanoate: step 1/4. The protein operates within amino-acid biosynthesis; L-valine biosynthesis; L-valine from pyruvate: step 1/4. Its activity is regulated as follows. Sensitive to valine inhibition. The polypeptide is Acetolactate synthase isozyme 3 small subunit (ilvH) (Escherichia coli (strain K12)).